Consider the following 271-residue polypeptide: Tryptophan synthase alpha chain (271 aa).

Catalysis depends on proton acceptor residues E49 and D60.

The protein belongs to the TrpA family. As to quaternary structure, tetramer of two alpha and two beta chains.

The catalysed reaction is (1S,2R)-1-C-(indol-3-yl)glycerol 3-phosphate + L-serine = D-glyceraldehyde 3-phosphate + L-tryptophan + H2O. Its pathway is amino-acid biosynthesis; L-tryptophan biosynthesis; L-tryptophan from chorismate: step 5/5. Functionally, the alpha subunit is responsible for the aldol cleavage of indoleglycerol phosphate to indole and glyceraldehyde 3-phosphate. In Yersinia pestis bv. Antiqua (strain Angola), this protein is Tryptophan synthase alpha chain.